The following is an 84-amino-acid chain: uncharacterized protein (84 aa).

The cysteine motif stretch occupies residues 8–47; it reads CECCDRDLPPDSGDAMICTFECTFCAGCAETKLGGTCPNC.

This is an uncharacterized protein from Rhizobium meliloti (strain 1021) (Ensifer meliloti).